The following is a 165-amino-acid chain: Cytochrome c-550-like protein (165 aa).

The first 30 residues, Met-1–Ala-30, serve as a signal peptide directing secretion. Cys-75, Cys-78, His-79, and Cys-129 together coordinate heme c.

This sequence belongs to the cytochrome c family. PsbV subfamily. Heme c serves as cofactor.

The protein localises to the cellular thylakoid membrane. Its function is as follows. Possible low-potential cytochrome c. The sequence is that of Cytochrome c-550-like protein (psbV2) from Trichodesmium erythraeum (strain IMS101).